A 299-amino-acid polypeptide reads, in one-letter code: Protein LacX, chromosomal (299 aa).

This is Protein LacX, chromosomal (lacX) from Lactococcus lactis subsp. lactis (Streptococcus lactis).